Consider the following 138-residue polypeptide: Basic phospholipase A2 Tbo-G6D49 (138 aa).

Residues 1–16 (MRTLWIMAVLLVGVEG) form the signal peptide. Cystine bridges form between Cys-42/Cys-131, Cys-44/Cys-60, Cys-59/Cys-111, Cys-65/Cys-138, Cys-66/Cys-104, Cys-73/Cys-97, and Cys-91/Cys-102. Ca(2+) is bound by residues Tyr-43, Gly-45, and Gly-47. The active site involves His-63. Asp-64 is a binding site for Ca(2+). Asp-105 is a catalytic residue.

Monomer. It depends on Ca(2+) as a cofactor. As to expression, expressed by the venom gland.

Its subcellular location is the secreted. The catalysed reaction is a 1,2-diacyl-sn-glycero-3-phosphocholine + H2O = a 1-acyl-sn-glycero-3-phosphocholine + a fatty acid + H(+). In terms of biological role, snake venom phospholipase A2 (PLA2) that impairs hemostasis. It weakly inhibits ADP-induced platelet aggregation when tested on platelet rich plasma from human and rabbit blood (15-25% of inhibition at 5-10 ug of enzyme), and dose-dependently inhibits blood coagulation, possibly by inhibiting thrombin activation. Exhibits strong hydrolytic activities toward L-dipalmitoyl phosphatidylcholine. PLA2 catalyzes the calcium-dependent hydrolysis of the 2-acyl groups in 3-sn-phosphoglycerides. The sequence is that of Basic phospholipase A2 Tbo-G6D49 from Craspedocephalus borneensis (Borneo pit viper).